The chain runs to 355 residues: Probable nitronate monooxygenase (355 aa).

Residues asparagine 71, glutamine 175, glycine 180, glycine 218, and 237–240 (QMGT) contribute to the FMN site.

This sequence belongs to the nitronate monooxygenase family. NMO class I subfamily. FMN is required as a cofactor.

The enzyme catalyses 3 propionate 3-nitronate + 3 O2 + H2O = 3 3-oxopropanoate + 2 nitrate + nitrite + H2O2 + 3 H(+). Its function is as follows. Nitronate monooxygenase that uses molecular oxygen to catalyze the oxidative denitrification of alkyl nitronates. Acts on propionate 3-nitronate (P3N), the presumed physiological substrate. Probably functions in the detoxification of P3N, a metabolic poison produced by plants and fungi as a defense mechanism. The sequence is that of Probable nitronate monooxygenase from Staphylococcus aureus (strain JH1).